The following is a 258-amino-acid chain: Large ribosomal subunit protein eL8z (258 aa).

Residues 1–20 (MAPKRGGRAPVPAKKKTEKV) are disordered.

It belongs to the eukaryotic ribosomal protein eL8 family.

This is Large ribosomal subunit protein eL8z (RPL7A-1) from Oryza sativa subsp. japonica (Rice).